The chain runs to 195 residues: Putative NADH dehydrogenase/NAD(P)H nitroreductase RSc1004 (195 aa).

It belongs to the nitroreductase family. HadB/RutE subfamily. It depends on FMN as a cofactor.

The chain is Putative NADH dehydrogenase/NAD(P)H nitroreductase RSc1004 from Ralstonia nicotianae (strain ATCC BAA-1114 / GMI1000) (Ralstonia solanacearum).